A 301-amino-acid chain; its full sequence is Light-independent protochlorophyllide reductase iron-sulfur ATP-binding protein (301 aa).

Positions 1 to 26 (MSNGSVPVSGIGGRGDGEGSSQVHME) are disordered. ATP contacts are provided by residues 44–49 (GIGKST) and Lys73. Ser48 is a Mg(2+) binding site. Positions 129 and 163 each coordinate [4Fe-4S] cluster. 214 to 215 (NR) is a binding site for ATP.

Belongs to the NifH/BchL/ChlL family. Homodimer. Protochlorophyllide reductase is composed of three subunits; BchL, BchN and BchB. [4Fe-4S] cluster serves as cofactor.

The enzyme catalyses chlorophyllide a + oxidized 2[4Fe-4S]-[ferredoxin] + 2 ADP + 2 phosphate = protochlorophyllide a + reduced 2[4Fe-4S]-[ferredoxin] + 2 ATP + 2 H2O. The protein operates within porphyrin-containing compound metabolism; bacteriochlorophyll biosynthesis (light-independent). Its function is as follows. Component of the dark-operative protochlorophyllide reductase (DPOR) that uses Mg-ATP and reduced ferredoxin to reduce ring D of protochlorophyllide (Pchlide) to form chlorophyllide a (Chlide). This reaction is light-independent. The L component serves as a unique electron donor to the NB-component of the complex, and binds Mg-ATP. The sequence is that of Light-independent protochlorophyllide reductase iron-sulfur ATP-binding protein from Halorhodospira halophila (strain DSM 244 / SL1) (Ectothiorhodospira halophila (strain DSM 244 / SL1)).